We begin with the raw amino-acid sequence, 525 residues long: Histidine-rich glycoprotein (525 aa).

The signal sequence occupies residues 1-18 (MKVLTTALLLVTLQCSHA). Residues 19-122 (LSPTNCDASE…ESQDLSVNGY (104 aa)) enclose the Cystatin 1 domain. Disulfide bonds link Cys-24-Cys-504, Cys-78-Cys-89, Cys-103-Cys-124, Cys-201-Cys-414, and Cys-216-Cys-239. Residues 41–84 (GRRSGYVFELLRVSDAHLDRAGTATVYYLALDVIESDCWVLSTK) form an interaction with ATP5F1A region. N-linked (GlcNAc...) asparagine glycans are attached at residues Asn-112, Asn-123, and Asn-200. Positions 135 to 240 (NTKDSPVLLD…TPDSIDINCE (106 aa)) constitute a Cystatin 2 domain. A disordered region spans residues 273–447 (GSRDHHHTHK…SRKRGPGKGL (175 aa)). Positions 293-303 (EGKDNSDRPRL) are enriched in basic and acidic residues. Asn-322 and Asn-330 each carry an N-linked (GlcNAc...) asparagine glycan. The span at 339–404 (HGHRPHGHHP…GHHPHGHHPH (66 aa)) shows a compositional bias: basic residues. Residues 345 to 379 (GHHPHSHHPPGHHSHGHHPHGHHPHSHHSHGHHPP) are necessary for endothelial cell focal adhesions and anti-angiogenic activities. Phosphoserine is present on Ser-438.

In terms of assembly, interacts with THBS1 (via the TSP type I repeats); the interaction blocks the antiangiogenic effect of THBS1 with CD36. Interacts with HPSE; the interaction is enhanced at acidic pH, partially inhibits binding of HPSE to cell surface receptors and modulates its enzymatic activity. Interacts (via the HRR domain) with TMP1; the interaction partially mediates the antiangiogenic properties of HRG. Interacts with kappa and lambda light chains of IgG molecules. Interacts with ATP5F1A; the interaction occurs on the surface of T-cells and alters their cell morphology in concert with CONA. Binds IgG molecules containing kappa and lambda light chains and inhibits the formation of insoluble immunoglobulin complexes. Interacts with F12; the interaction, which is enhanced in the presence of zinc ions and inhibited by heparin-binding to HRG, inhibits factor XII autoactivation and contact-initiated coagulation. Interacts with PLG (via its Kringle domains); the interaction tethers PLG to the cell surface and enhances its activation. Interacts (via the HRR domain) with TPM1; the interaction appears to contribute to the antiangiogenic properties of the HRR domain. Interacts with THBS2; the interaction blocks the antiangiogenic effect of THBS2 with CD36. Requires Zn(2+) as cofactor. In terms of processing, proteolytic cleavage produces several HRG fragments which are mostly disulfide-linked and, therefore, not released. Cleavage by plasmin is inhibited in the presence of heparin, zinc ions or in an acidic environment. Cleavage reduces binding of HRG to heparan sulfate, but enhances the ability of HRG to bind and tether plasminogen to the cell surface. On platelet activation, releases a 33 kDa antiangiogenic peptide which encompasses the HRR. Also cleaved in the C-terminal by plasmin. Post-translationally, N-glycosylated. Expressed in liver, blood plasma, serum and in platelets. Also present in fibrin clots, wound fluid from acute wounds and chronic leg ulcers.

The protein localises to the secreted. Its function is as follows. Plasma glycoprotein that binds a number of ligands such as heme, heparin, heparan sulfate, thrombospondin, plasminogen, and divalent metal ions. Binds heparin and heparin/glycosaminoglycans in a zinc-dependent manner. Binds heparan sulfate on the surface of liver, lung, kidney and heart endothelial cells. Binds to N-sulfated polysaccharide chains on the surface of liver endothelial cells. Inhibits rosette formation. Acts as an adapter protein and is implicated in regulating many processes such as immune complex and pathogen clearance, cell chemotaxis, cell adhesion, angiogenesis, coagulation and fibrinolysis. Mediates clearance of necrotic cells through enhancing the phagocytosis of necrotic cells in a heparan sulfate-dependent pathway. This process can be regulated by the presence of certain HRG ligands such as heparin and zinc ions. Binds to IgG subclasses of immunoglobins containing kappa and lambda light chains with different affinities regulating their clearance and inhibiting the formation of insoluble immune complexes. Tethers plasminogen to the cell surface. Binds T-cells and alters the cell morphology. Acts as a regulator of the vascular endothelial growth factor (VEGF) signaling pathway; inhibits endothelial cell motility by reducing VEGF-induced complex formation between PXN/paxillin and ILK/integrin-linked protein kinase and by promoting inhibition of VEGF-induced tyrosine phosphorylation of focal adhesion kinases and alpha-actinins in endothelial cells. Also plays a role in the regulation of tumor angiogenesis and tumor immune surveillance. Normalizes tumor vessels and promotes antitumor immunity by polarizing tumor-associated macrophages, leading to decreased tumor growth and metastasis. Modulates angiogenesis by blocking the CD6-mediated antiangiongenic effect of thrombospondins, THBS1 and THBS2. This Mus musculus (Mouse) protein is Histidine-rich glycoprotein (Hrg).